A 375-amino-acid chain; its full sequence is ATP phosphoribosyltransferase regulatory subunit (375 aa).

It belongs to the class-II aminoacyl-tRNA synthetase family. HisZ subfamily. In terms of assembly, heteromultimer composed of HisG and HisZ subunits.

It localises to the cytoplasm. It participates in amino-acid biosynthesis; L-histidine biosynthesis; L-histidine from 5-phospho-alpha-D-ribose 1-diphosphate: step 1/9. Functionally, required for the first step of histidine biosynthesis. May allow the feedback regulation of ATP phosphoribosyltransferase activity by histidine. This Agrobacterium fabrum (strain C58 / ATCC 33970) (Agrobacterium tumefaciens (strain C58)) protein is ATP phosphoribosyltransferase regulatory subunit.